A 449-amino-acid chain; its full sequence is C4-dicarboxylate transport protein 1 (449 aa).

The next 8 membrane-spanning stretches (helical) occupy residues 16–38, 53–71, 84–106, 157–176, 197–219, 229–251, 311–333, and 358–380; these read FLQV…DLAV, MLIA…SGAG, VIYF…YSLG, ILQV…LVGE, GMIV…ARYG, LVLV…VLRL, GFSI…PLAM, and LVIL…VLVL.

This sequence belongs to the dicarboxylate/amino acid:cation symporter (DAACS) (TC 2.A.23) family.

The protein localises to the cell inner membrane. Functionally, responsible for the transport of dicarboxylates such as succinate, fumarate, and malate from the periplasm across the membrane. The sequence is that of C4-dicarboxylate transport protein 1 (dctA1) from Pseudomonas aeruginosa (strain ATCC 15692 / DSM 22644 / CIP 104116 / JCM 14847 / LMG 12228 / 1C / PRS 101 / PAO1).